The primary structure comprises 628 residues: ATP-dependent zinc metalloprotease FtsH (628 aa).

Residues 1–7 (MKLSWKT) lie on the Stromal side of the membrane. Residues 8–28 (LLLWSLPIFVIGFFFWQGFLG) form a helical membrane-spanning segment. Topologically, residues 29-118 (PTTTDVGSNI…AHPPKSTSAV (90 aa)) are lumenal. A helical transmembrane segment spans residues 119 to 139 (WGLLGNLLFPLLLVGGLAFLF). Residues 140–628 (RRSNNASGGP…PEKNYYISQF (489 aa)) are Stromal-facing. Residue 213–220 (GPPGTGKT) coordinates ATP. H434 is a binding site for Zn(2+). Residue E435 is part of the active site. The Zn(2+) site is built by H438 and D512.

It in the central section; belongs to the AAA ATPase family. The protein in the C-terminal section; belongs to the peptidase M41 family. In terms of assembly, homohexamer. Zn(2+) is required as a cofactor.

Its subcellular location is the plastid. It localises to the chloroplast thylakoid membrane. Its function is as follows. Acts as a processive, ATP-dependent zinc metallopeptidase. The protein is ATP-dependent zinc metalloprotease FtsH of Pyropia yezoensis (Susabi-nori).